The chain runs to 405 residues: Serine-type anaerobic sulfatase-maturating enzyme (405 aa).

In terms of domain architecture, Radical SAM core spans 18–249 (PRSPVPFHIL…QWRKRCDRGR (232 aa)). Positions 35 and 39 each coordinate [4Fe-4S] cluster. Tyrosine 41 is an S-adenosyl-L-methionine binding site. [4Fe-4S] cluster is bound at residue cysteine 42. S-adenosyl-L-methionine contacts are provided by glycine 84, serine 140, and arginine 152. [4Fe-4S] cluster contacts are provided by cysteine 270, cysteine 276, and cysteine 291. Catalysis depends on aspartate 292, which acts as the Proton acceptor. Cysteine 331, cysteine 334, cysteine 340, cysteine 344, and cysteine 357 together coordinate [4Fe-4S] cluster.

The protein belongs to the radical SAM superfamily. Anaerobic sulfatase-maturating enzyme family. In terms of assembly, monomer. Interacts with AtsA prior to its export to the periplasm. [4Fe-4S] cluster is required as a cofactor.

The protein resides in the cytoplasm. It catalyses the reaction L-seryl-[sulfatase] + S-adenosyl-L-methionine = 3-oxo-L-alanyl-[sulfatase] + 5'-deoxyadenosine + L-methionine + H(+). It functions in the pathway protein modification; sulfatase oxidation. Its function is as follows. Involved in 'Ser-type' sulfatase maturation under anaerobic conditions. Catalyzes the post-translational modification of serine ('Ser-72' in the arylsulfatase AtsA) into 3-oxoalanine (also known as C(alpha)-formylglycine (FGly)), by a free radical chemical mechanism initiated via the reductive cleavage of S-adenosyl-L-methionine (SAM). This chain is Serine-type anaerobic sulfatase-maturating enzyme, found in Klebsiella aerogenes (Enterobacter aerogenes).